Consider the following 274-residue polypeptide: Thiamine kinase (274 aa).

Belongs to the thiamine kinase family.

The enzyme catalyses thiamine + ATP = thiamine phosphate + ADP + H(+). The protein operates within cofactor biosynthesis; thiamine diphosphate biosynthesis; thiamine phosphate from thiamine: step 1/1. In terms of biological role, catalyzes the ATP-dependent phosphorylation of thiamine to thiamine phosphate. Is involved in thiamine salvage. This is Thiamine kinase from Escherichia coli O157:H7.